The following is a 500-amino-acid chain: Polyamine oxidase 1 (500 aa).

A signal peptide spans 1 to 28 (MSSSPSFGLLAVAALLLALSLAQHGSLA). FAD-binding positions include 42–43 (MS), glutamate 63, arginine 71, and 87–88 (NW). Residue glutamate 90 coordinates substrate. Asparagine 105 carries an N-linked (GlcNAc...) asparagine glycan. Glutamate 198 is a binding site for substrate. Residues valine 265, tyrosine 427, and glutamate 458 each coordinate FAD. Glycine 466 is a substrate binding site. 467–468 (YV) is a binding site for FAD. Cysteine 485 and cysteine 491 are disulfide-bonded.

The protein belongs to the flavin monoamine oxidase family. As to quaternary structure, monomer. FAD is required as a cofactor.

Its subcellular location is the secreted. The protein resides in the extracellular space. It localises to the apoplast. It is found in the cell wall. The catalysed reaction is spermidine + O2 + H2O = 4-aminobutanal + propane-1,3-diamine + H2O2. It catalyses the reaction N(8)-acetylspermidine + O2 + H2O = 4-acetamidobutanal + propane-1,3-diamine + H2O2. The enzyme catalyses spermine + O2 + H2O = N-(3-aminopropyl)-4-aminobutanal + propane-1,3-diamine + H2O2. It carries out the reaction N(1)-acetylspermine + O2 + H2O = N-(3-acetamidopropyl)-4-aminobutanal + propane-1,3-diamine + H2O2. It functions in the pathway amine and polyamine degradation; spermine degradation. Functionally, flavoenzyme involved in polyamine back-conversion. Catalyzes the oxidation of the secondary amino group of polyamines, such as spermine, spermidine and their acetyl derivatives. Plays an important role in the regulation of polyamine intracellular concentration. The chain is Polyamine oxidase 1 from Zea mays (Maize).